The primary structure comprises 441 residues: D-aminoacyl-tRNA deacylase (441 aa).

The protein belongs to the DtdA deacylase family. As to quaternary structure, monomer. Zn(2+) serves as cofactor.

It catalyses the reaction a D-aminoacyl-tRNA + H2O = a tRNA + a D-alpha-amino acid + H(+). The catalysed reaction is glycyl-tRNA(Ala) + H2O = tRNA(Ala) + glycine + H(+). D-aminoacyl-tRNA deacylase with broad substrate specificity. By recycling D-aminoacyl-tRNA to D-amino acids and free tRNA molecules, this enzyme counteracts the toxicity associated with the formation of D-aminoacyl-tRNA entities in vivo. This chain is D-aminoacyl-tRNA deacylase, found in Natronomonas pharaonis (strain ATCC 35678 / DSM 2160 / CIP 103997 / JCM 8858 / NBRC 14720 / NCIMB 2260 / Gabara) (Halobacterium pharaonis).